Consider the following 130-residue polypeptide: Small ribosomal subunit protein uS8 (130 aa).

This sequence belongs to the universal ribosomal protein uS8 family. In terms of assembly, part of the 30S ribosomal subunit.

One of the primary rRNA binding proteins, it binds directly to 16S rRNA central domain where it helps coordinate assembly of the platform of the 30S subunit. The protein is Small ribosomal subunit protein uS8 of Methanopyrus kandleri (strain AV19 / DSM 6324 / JCM 9639 / NBRC 100938).